We begin with the raw amino-acid sequence, 133 residues long: Large ribosomal subunit protein uL15 (133 aa).

The disordered stretch occupies residues 1 to 60; the sequence is MALENLKPAQGSTKDRKRVGRGQGSGMGKTSTRGGKGQTARTGYKAKRGFEGGQQPLQRR.

Belongs to the universal ribosomal protein uL15 family. In terms of assembly, part of the 50S ribosomal subunit.

In terms of biological role, binds to the 23S rRNA. In Wolinella succinogenes (strain ATCC 29543 / DSM 1740 / CCUG 13145 / JCM 31913 / LMG 7466 / NCTC 11488 / FDC 602W) (Vibrio succinogenes), this protein is Large ribosomal subunit protein uL15.